Here is a 613-residue protein sequence, read N- to C-terminus: MEASKQMRVSRPYKISESSKVYHWPGHSTTVLQRLNEQRLHGLFCDVVLVVEEQQVPAHRNLLAVCSDYFNSMFTLGMREAFQKEVELVGTSYVGLKAVVDFLYSSELELDGSNIDYILETAHLLQIWTVVDFCCEYLEQEVSEDNYLYLQELASIYSLKRLDAFIDSFVLNHFSTLSFTPDFLQTVSVQKLCIYLSSGQVQHTWEYDLLQAALQWLTQQPEREVHTCRVLENIRFPLFPEDILLQRVKLAMCSLLPSEANGEGFVEEAMHYHNSLVAQPVLQTKRTLLRSEECLLFVGGEVSERCLELSDDTCYLDTKNEQWVKETSLPARRSHHCVAVLGGFIFVAGGSFSRDNGGNAASNLLYRYDPRRKQWIKVASMNQRRVDFYLASIEDMLVAVGGRNENGALSSVETYSPKTNSWTYVAGLPRFTYGHAGTIYKDFVYISGGHDYQIGPYRKNLLCYDHRTDVWEERRPMTTARGWHSMCSLGDSIYSIGGSDDHMESMERFDVLGVEAYSPQCNQWTRVAPLLQANSESGVAVWQGRIYILGGYSWESTAFSRAVQVYDREANRWSRGPDLPNAIAGVSACVCALNPRLEEKKKKNKDKRQDRGQ.

In terms of domain architecture, BTB spans 45-112 (CDVVLVVEEQ…LYSSELELDG (68 aa)). The BACK domain occupies 147–249 (YLYLQELASI…PEDILLQRVK (103 aa)). 6 Kelch repeats span residues 294–343 (CLLF…VLGG), 344–395 (FIFV…SIED), 396–442 (MLVA…IYKD), 444–491 (VYIS…SLGD), 492–544 (SIYS…VWQG), and 545–593 (RIYI…VCAL).

Interacts with CUL3.

Its pathway is protein modification; protein ubiquitination. Probable substrate-specific adapter of an E3 ubiquitin-protein ligase complex which mediates the ubiquitination and subsequent proteasomal degradation of target proteins. This Rattus norvegicus (Rat) protein is Kelch-like protein 36 (Klhl36).